Here is a 908-residue protein sequence, read N- to C-terminus: MAAATAAAAAAAAAGEGMEPRALQYEQTLMYGRYTQELGAFAKEEAARIRLGGPEPWKGSPSARATPELLEYGQSRCARCRICSVRCHKFLVSRVGEDWIFLVLLGLLMALVSWAMDYAIAVCLQAQQWMSRGLNTNILLQYLAWVTYPVVLITFSAGFTQILAPQAVGSGIPEMKTILRGVVLKEYLTLKTFVAKVIGLTCALGSGMPLGKEGPFVHIASMCAALLSKFLSLFGGIYEHESRNTEMLAAACAVGVGCCFAAPIGGVLFSIEVTSTFFAVRNYWRGFFAATFSAFIFRVLAVWNRDEETITALFKTRFRLDFPFDLQELPAFAVIGIASGFGGALFVYLNRKIVQVMRKQKTINRFLMRKRLLFPALVTLLISTLTFPPGFGQFMAGQLSQKETLVTLFDNRTWVRQGLVEDLELPSTSQAWSPPRANVFLTLVIFILMKFWMSALATTIPVPCGAFMPVFVIGAAFGRLVGESMAAWFPDGIHTDSSTYRIVPGGYAVVGAAALAGAVTHTVSTAVIVFELTGQIAHILPVMIAVILANAVAQSLQPSLYDSIIRIKKLPYLPELGWGRHQQYRVRVEDIMVRDVPHVALSCTFRDLRLALHRTKGRMLALVESPESMILLGSIERSQVVALLGAQLSPARRRQHMQKLRKAQLSPPSDQESPPSSETSIRFQVNTEDSGFSGAHGQTHKPLKPALKRGPSNSTSLQEGTTGNMESAGIALRSLFCGSPPLEATSELEKSESCDKRKLKRVRISLASDSDPEAEMSPEEILEWEEQQLDEPVNFSDCKIDPAPFQLVERTSLHKTHTIFSLLGVDHAYVTSIGRLIGIVTLKELRKAIEGSVTAQGVKVRPPLASFRDSATSSSDTETTEVHALWGPRSRHGLPREGTPSDSDDKCQ.

Residues 1 to 95 (MAAATAAAAA…RCHKFLVSRV (95 aa)) are Cytoplasmic-facing. The interval 24 to 42 (QYEQTLMYGRYTQELGAFA) is essential for channel gating by both voltage and cell volume. Phosphothreonine is present on T28. The interval 44-57 (EEAARIRLGGPEPW) is modulates channel gating by both voltage and cell volume. 2 consecutive transmembrane segments (helical) span residues 96 to 129 (GEDW…AQQW) and 138 to 163 (ILLQ…TQIL). The Selectivity filter part_1 motif lies at 169 to 173 (GSGIP). S170 serves as a coordination point for chloride. An intramembrane region (helical) is located at residues 172 to 179 (IPEMKTIL). 2 helical membrane-spanning segments follow: residues 188–206 (LTLK…ALGS) and 213–231 (EGPF…SKFL). Residues 211 to 215 (GKEGP) carry the Selectivity filter part_2 motif. Intramembrane regions (helical) lie at residues 247–259 (MLAA…VGCC) and 263–271 (PIGGVLFSI). A run of 5 helical transmembrane segments spans residues 283-303 (YWRG…LAVW), 329-357 (LPAF…VQVM), 366-385 (FLMR…ISTL), 437-457 (ANVF…SALA), and 465-488 (GAFM…MAAW). The short motif at 465–469 (GAFMP) is the Selectivity filter part_3 element. F467 serves as a coordination point for chloride. The segment at residues 505–519 (GGYAVVGAAALAGAV) is an intramembrane region (helical). Residues 520–521 (TH) constitute an intramembrane region (note=Loop between two helices). The segment at residues 522–533 (TVSTAVIVFELT) is an intramembrane region (helical). The note=Loop between two helices intramembrane region spans 534–538 (GQIAH). The helical transmembrane segment at 539 to 556 (ILPVMIAVILANAVAQSL) threads the bilayer. The Cytoplasmic portion of the chain corresponds to 557 to 908 (QPSLYDSIIR…TPSDSDDKCQ (352 aa)). Y561 contributes to the chloride binding site. In terms of domain architecture, CBS 1 spans 592-650 (MVRDVPHVALSCTFRDLRLALHRTKGRMLALVESPESMILLGSIERSQVVALLGAQLSP). The segment covering 653–662 (RRQHMQKLRK) has biased composition (basic residues). Residues 653–722 (RRQHMQKLRK…NSTSLQEGTT (70 aa)) are disordered. The span at 666–680 (SPPSDQESPPSSETS) shows a compositional bias: low complexity. Over residues 681-690 (IRFQVNTEDS) the composition is skewed to polar residues. Basic residues predominate over residues 698–707 (QTHKPLKPAL). A compositionally biased stretch (polar residues) spans 711–722 (PSNSTSLQEGTT). Position 768 is a phosphoserine (S768). A CBS 2 domain is found at 800–860 (IDPAPFQLVE…GSVTAQGVKV (61 aa)). Positions 822 to 823 (LL) match the Basolateral membrane sorting motif. Positions 866 to 908 (SFRDSATSSSDTETTEVHALWGPRSRHGLPREGTPSDSDDKCQ) are disordered.

The protein belongs to the chloride channel (TC 2.A.49) family. ClC-2/CLCN2 subfamily. In terms of assembly, homodimer. Interacts with auxiliary subunit HEPACAM. Post-translationally, phosphorylated. Activated by dephosphorylation. As to expression, expressed in the adrenal gland and brain. Expressed in intestinal epithelium (at protein level). Expressed in salivary gland (at protein level).

Its subcellular location is the cell membrane. It localises to the myelin membrane. It is found in the basolateral cell membrane. The protein localises to the cell projection. The protein resides in the dendritic spine membrane. Its subcellular location is the axon. It catalyses the reaction chloride(in) = chloride(out). It carries out the reaction thiocyanate(in) = thiocyanate(out). The catalysed reaction is bromide(in) = bromide(out). The enzyme catalyses nitrate(in) = nitrate(out). It catalyses the reaction iodide(out) = iodide(in). Common gate kinetics are down-regulated by intracellular ATP. Inhibited by AK-42, a derivative of meclofenamate. Inhibited by Cd(2+). Inhibited by Zn(2+) and PKC activation. Inhibited at acidic pH. CCLN2:HEPACAM channel conductance is up-regulated upon hypo-osmolarity. Voltage-gated and osmosensitive chloride channel. Forms a homodimeric channel where each subunit has its own ion conduction pathway. Conducts double-barreled currents controlled by two types of gates, two fast glutamate gates that control each subunit independently and a slow common gate that opens and shuts off both subunits simultaneously. Displays inward rectification currents activated upon membrane hyperpolarization and extracellular hypotonicity. Contributes to chloride conductance involved in neuron excitability. In hippocampal neurons, generates a significant part of resting membrane conductance and provides an additional chloride efflux pathway to prevent chloride accumulation in dendrites upon GABA receptor activation. In glia, associates with the auxiliary subunit HEPACAM/GlialCAM at astrocytic processes and myelinated fiber tracts where it may regulate transcellular chloride flux buffering extracellular chloride and potassium concentrations. Regulates aldosterone production in adrenal glands. The opening of CLCN2 channels at hyperpolarized membrane potentials in the glomerulosa causes cell membrane depolarization, activation of voltage-gated calcium channels and increased expression of aldosterone synthase, the rate-limiting enzyme for aldosterone biosynthesis. Contributes to chloride conductance in retinal pigment epithelium involved in phagocytosis of shed photoreceptor outer segments and photoreceptor renewal. Conducts chloride currents at the basolateral membrane of epithelial cells with a role in chloride reabsorption rather than secretion. Permeable to small monovalent anions with chloride &gt; thiocyanate &gt; bromide &gt; nitrate &gt; iodide ion selectivity. In Mus musculus (Mouse), this protein is Chloride channel protein 2 (Clcn2).